Consider the following 400-residue polypeptide: Tryptophan synthase beta chain (400 aa).

An N6-(pyridoxal phosphate)lysine modification is found at Lys92.

Belongs to the TrpB family. As to quaternary structure, tetramer of two alpha and two beta chains. Pyridoxal 5'-phosphate is required as a cofactor.

The enzyme catalyses (1S,2R)-1-C-(indol-3-yl)glycerol 3-phosphate + L-serine = D-glyceraldehyde 3-phosphate + L-tryptophan + H2O. Its pathway is amino-acid biosynthesis; L-tryptophan biosynthesis; L-tryptophan from chorismate: step 5/5. Its function is as follows. The beta subunit is responsible for the synthesis of L-tryptophan from indole and L-serine. This chain is Tryptophan synthase beta chain, found in Neisseria meningitidis serogroup A / serotype 4A (strain DSM 15465 / Z2491).